Here is a 170-residue protein sequence, read N- to C-terminus: Crossover junction endodeoxyribonuclease RuvC (170 aa).

Residues aspartate 9, glutamate 70, and aspartate 145 contribute to the active site. Mg(2+) contacts are provided by aspartate 9, glutamate 70, and aspartate 145.

Belongs to the RuvC family. In terms of assembly, homodimer which binds Holliday junction (HJ) DNA. The HJ becomes 2-fold symmetrical on binding to RuvC with unstacked arms; it has a different conformation from HJ DNA in complex with RuvA. In the full resolvosome a probable DNA-RuvA(4)-RuvB(12)-RuvC(2) complex forms which resolves the HJ. The cofactor is Mg(2+).

The protein localises to the cytoplasm. The enzyme catalyses Endonucleolytic cleavage at a junction such as a reciprocal single-stranded crossover between two homologous DNA duplexes (Holliday junction).. The RuvA-RuvB-RuvC complex processes Holliday junction (HJ) DNA during genetic recombination and DNA repair. Endonuclease that resolves HJ intermediates. Cleaves cruciform DNA by making single-stranded nicks across the HJ at symmetrical positions within the homologous arms, yielding a 5'-phosphate and a 3'-hydroxyl group; requires a central core of homology in the junction. The consensus cleavage sequence is 5'-(A/T)TT(C/G)-3'. Cleavage occurs on the 3'-side of the TT dinucleotide at the point of strand exchange. HJ branch migration catalyzed by RuvA-RuvB allows RuvC to scan DNA until it finds its consensus sequence, where it cleaves and resolves the cruciform DNA. This is Crossover junction endodeoxyribonuclease RuvC from Chlamydia trachomatis serovar L2 (strain ATCC VR-902B / DSM 19102 / 434/Bu).